Reading from the N-terminus, the 132-residue chain is Small ribosomal subunit protein uS8 (132 aa).

The protein belongs to the universal ribosomal protein uS8 family. Part of the 30S ribosomal subunit. Contacts proteins S5 and S12.

Functionally, one of the primary rRNA binding proteins, it binds directly to 16S rRNA central domain where it helps coordinate assembly of the platform of the 30S subunit. The polypeptide is Small ribosomal subunit protein uS8 (Streptococcus pyogenes serotype M1).